The sequence spans 252 residues: MERLLIVNADDFGLSKGQNYGIIEACRNGIVTSTTALVNGQAIDHAVQLSRDEPSLAIGMHFVLTMGKPLTAMPGLTRDGVLGKWIWQLAEEDALPLEEITQELASQYLRFIELFGRKPTHLDSHHHVHMFPQIFPIVARFAAEEGIALRIDRQPLSNSGDLPANLRSSQGFSSAFYGEEISEALFLQVLDDASHRGDLSLEVMCHPAFIDNTIRQSAYCFPRLTELEVLTSASLKYAIAERGYRLGSYLNV.

The Mg(2+) site is built by histidine 61 and histidine 125.

It belongs to the YdjC deacetylase family. ChbG subfamily. As to quaternary structure, homodimer. It depends on Mg(2+) as a cofactor.

The protein resides in the cytoplasm. The catalysed reaction is N,N'-diacetylchitobiose + H2O = N-acetyl-beta-D-glucosaminyl-(1-&gt;4)-D-glucosamine + acetate. It carries out the reaction diacetylchitobiose-6'-phosphate + H2O = N'-monoacetylchitobiose-6'-phosphate + acetate. The protein operates within glycan degradation; chitin degradation. Functionally, involved in the degradation of chitin. ChbG is essential for growth on the acetylated chitooligosaccharides chitobiose and chitotriose but is dispensable for growth on cellobiose and chitosan dimer, the deacetylated form of chitobiose. Deacetylation of chitobiose-6-P and chitotriose-6-P is necessary for both the activation of the chb promoter by the regulatory protein ChbR and the hydrolysis of phosphorylated beta-glucosides by the phospho-beta-glucosidase ChbF. Catalyzes the removal of only one acetyl group from chitobiose-6-P to yield monoacetylchitobiose-6-P, the inducer of ChbR and the substrate of ChbF. The sequence is that of Chitooligosaccharide deacetylase from Escherichia coli (strain 55989 / EAEC).